The sequence spans 234 residues: Large ribosomal subunit protein uL1 (234 aa).

Belongs to the universal ribosomal protein uL1 family. As to quaternary structure, part of the 50S ribosomal subunit.

In terms of biological role, binds directly to 23S rRNA. The L1 stalk is quite mobile in the ribosome, and is involved in E site tRNA release. Functionally, protein L1 is also a translational repressor protein, it controls the translation of the L11 operon by binding to its mRNA. This Aliivibrio salmonicida (strain LFI1238) (Vibrio salmonicida (strain LFI1238)) protein is Large ribosomal subunit protein uL1.